We begin with the raw amino-acid sequence, 214 residues long: Probable nicotinate-nucleotide adenylyltransferase (214 aa).

It belongs to the NadD family.

The catalysed reaction is nicotinate beta-D-ribonucleotide + ATP + H(+) = deamido-NAD(+) + diphosphate. It functions in the pathway cofactor biosynthesis; NAD(+) biosynthesis; deamido-NAD(+) from nicotinate D-ribonucleotide: step 1/1. Catalyzes the reversible adenylation of nicotinate mononucleotide (NaMN) to nicotinic acid adenine dinucleotide (NaAD). In Pseudomonas fluorescens (strain ATCC BAA-477 / NRRL B-23932 / Pf-5), this protein is Probable nicotinate-nucleotide adenylyltransferase.